Consider the following 329-residue polypeptide: uncharacterized protein (329 aa).

The stretch at 56-247 (LNKEEQFQED…EAEKTHQAKL (192 aa)) forms a coiled coil.

This is an uncharacterized protein from Bos taurus (Bovine).